The chain runs to 179 residues: Large ribosomal subunit protein uL6 (179 aa).

Positions 151-179 (RKPEPYKGKGIKYDNEQIRRKAGKSGGKK) are disordered. The segment covering 152 to 169 (KPEPYKGKGIKYDNEQIR) has biased composition (basic and acidic residues). Positions 170–179 (RKAGKSGGKK) are enriched in basic residues.

The protein belongs to the universal ribosomal protein uL6 family. As to quaternary structure, part of the 50S ribosomal subunit.

In terms of biological role, this protein binds to the 23S rRNA, and is important in its secondary structure. It is located near the subunit interface in the base of the L7/L12 stalk, and near the tRNA binding site of the peptidyltransferase center. The protein is Large ribosomal subunit protein uL6 of Nitratidesulfovibrio vulgaris (strain ATCC 29579 / DSM 644 / CCUG 34227 / NCIMB 8303 / VKM B-1760 / Hildenborough) (Desulfovibrio vulgaris).